The sequence spans 147 residues: Signal peptidase complex subunit 3 (147 aa).

At 1 to 6 (MHSWVQ) the chain is on the cytoplasmic side. Residues 7–29 (RLLTTATTAALLLLAACCAASAL) form a helical; Signal-anchor for type II membrane protein membrane-spanning segment. The Lumenal segment spans residues 30–147 (DAFHVPSVQA…EFNLPDSYTS (118 aa)).

It belongs to the SPCS3 family. In terms of assembly, component of the signal peptidase complex (SPC) composed of a catalytic subunit SEC11 and three accessory subunits SPCS1, SPCS2 and SPCS3. The complex induces a local thinning of the ER membrane which is used to measure the length of the signal peptide (SP) h-region of protein substrates. This ensures the selectivity of the complex towards h-regions shorter than 18-20 amino acids.

It localises to the endoplasmic reticulum membrane. In terms of biological role, essential component of the signal peptidase complex (SPC) which catalyzes the cleavage of N-terminal signal sequences from nascent proteins as they are translocated into the lumen of the endoplasmic reticulum. Essential for the SPC catalytic activity, possibly by stabilizing and positioning the active center of the complex close to the lumenal surface. The sequence is that of Signal peptidase complex subunit 3 from Oryza sativa subsp. japonica (Rice).